The chain runs to 192 residues: Ion-translocating oxidoreductase complex subunit B (192 aa).

Residues 1–26 (MNTIWIAVGALTLLGLVFGAILGYAS) form a hydrophobic region. Positions 32–91 (EDDPVVEKIDAILPQSQCGQCGYPGCRPYAEAVGLQGEKINRCAPGGEAVMLKIAELLNV) constitute a 4Fe-4S domain. 12 residues coordinate [4Fe-4S] cluster: C49, C52, C57, C74, C117, C120, C123, C127, C147, C150, C153, and C157. 4Fe-4S ferredoxin-type domains lie at 108 to 137 (MLAV…GATR) and 138 to 167 (AMHT…LRPV).

The protein belongs to the 4Fe4S bacterial-type ferredoxin family. RnfB subfamily. The complex is composed of six subunits: RsxA, RsxB, RsxC, RsxD, RsxE and RsxG. It depends on [4Fe-4S] cluster as a cofactor.

It is found in the cell inner membrane. Functionally, part of a membrane-bound complex that couples electron transfer with translocation of ions across the membrane. Required to maintain the reduced state of SoxR. This Salmonella dublin (strain CT_02021853) protein is Ion-translocating oxidoreductase complex subunit B.